The sequence spans 456 residues: Glycerol-3-phosphate acyltransferase 4 (456 aa).

A signal peptide spans 1–37 (MFLLLPFDSLIVNLLGISLTVLFTLLLVFIIVPAIFG). 2 helical membrane-spanning segments follow: residues 156 to 176 (ISLR…CFLL) and 180 to 200 (IALA…VGYL). N-linked (GlcNAc...) asparagine glycosylation is present at Asn-247. Positions 248-253 (HTSPID) match the HXXXXD motif motif. 3 N-linked (GlcNAc...) asparagine glycosylation sites follow: Asn-327, Asn-328, and Asn-362.

This sequence belongs to the 1-acyl-sn-glycerol-3-phosphate acyltransferase family. As to expression, ubiquitous. High levels in testis. Relatively high level of expression in skeletal muscle and heart. Relatively low level of expression in lung.

The protein localises to the endoplasmic reticulum membrane. The catalysed reaction is sn-glycerol 3-phosphate + an acyl-CoA = a 1-acyl-sn-glycero-3-phosphate + CoA. The enzyme catalyses dodecanoyl-CoA + sn-glycerol 3-phosphate = 1-dodecanoyl-sn-glycerol 3-phosphate + CoA. It carries out the reaction sn-glycerol 3-phosphate + hexadecanoyl-CoA = 1-hexadecanoyl-sn-glycero-3-phosphate + CoA. It catalyses the reaction sn-glycerol 3-phosphate + octadecanoyl-CoA = 1-octadecanoyl-sn-glycero-3-phosphate + CoA. The catalysed reaction is sn-glycerol 3-phosphate + (9Z)-octadecenoyl-CoA = 1-(9Z-octadecenoyl)-sn-glycero-3-phosphate + CoA. The enzyme catalyses (9Z,12Z)-octadecadienoyl-CoA + sn-glycerol 3-phosphate = 1-(9Z,12Z)-octadecadienoyl-sn-glycero-3-phosphate + CoA. Its pathway is phospholipid metabolism; CDP-diacylglycerol biosynthesis; CDP-diacylglycerol from sn-glycerol 3-phosphate: step 1/3. Its activity is regulated as follows. Inhibited by N-ethylmaleimide (NEM). Its function is as follows. Converts glycerol-3-phosphate to 1-acyl-sn-glycerol-3-phosphate (lysophosphatidic acid or LPA) by incorporating an acyl moiety at the sn-1 position of the glycerol backbone. Active against both saturated and unsaturated long-chain fatty acyl-CoAs. Protects cells against lipotoxicity. The protein is Glycerol-3-phosphate acyltransferase 4 of Homo sapiens (Human).